The chain runs to 190 residues: Protein LZIC (190 aa).

The stretch at 2–63 (ASRGKTETSK…SEFNDSLKKI (62 aa)) forms a coiled coil.

Belongs to the CTNNBIP1 family. Does not interact with CTNNB1.

This chain is Protein LZIC (Lzic), found in Mus musculus (Mouse).